A 287-amino-acid polypeptide reads, in one-letter code: Isopentenyl-diphosphate Delta-isomerase I (287 aa).

The 153-residue stretch at 105–257 (LLHRAFSVFL…GVKLSPWFRL (153 aa)) folds into the Nudix hydrolase domain. Catalysis depends on residues Cys142 and Tyr207.

It belongs to the IPP isomerase type 1 family.

The enzyme catalyses isopentenyl diphosphate = dimethylallyl diphosphate. It participates in isoprenoid biosynthesis; dimethylallyl diphosphate biosynthesis; dimethylallyl diphosphate from isopentenyl diphosphate: step 1/1. Its pathway is porphyrin-containing compound metabolism; chlorophyll biosynthesis. Its function is as follows. Catalyzes the 1,3-allylic rearrangement of the homoallylic substrate isopentenyl (IPP) to its highly electrophilic allylic isomer, dimethylallyl diphosphate (DMAPP). The polypeptide is Isopentenyl-diphosphate Delta-isomerase I (IPI1) (Clarkia breweri (Fairy fans)).